We begin with the raw amino-acid sequence, 334 residues long: Glyceraldehyde-3-phosphate dehydrogenase 1 (334 aa).

Residues 12–13 (RI), D35, and R79 each bind NAD(+). Residues 152–154 (SCT), T183, R198, 211–212 (SG), and R234 contribute to the D-glyceraldehyde 3-phosphate site. C153 serves as the catalytic Nucleophile. N315 contributes to the NAD(+) binding site.

Belongs to the glyceraldehyde-3-phosphate dehydrogenase family. In terms of assembly, homotetramer.

It is found in the cytoplasm. The catalysed reaction is D-glyceraldehyde 3-phosphate + phosphate + NAD(+) = (2R)-3-phospho-glyceroyl phosphate + NADH + H(+). Its pathway is carbohydrate degradation; glycolysis; pyruvate from D-glyceraldehyde 3-phosphate: step 1/5. Resistant to pentalenolactone. In terms of biological role, catalyzes the oxidative phosphorylation of glyceraldehyde 3-phosphate (G3P) to 1,3-bisphosphoglycerate (BPG) using the cofactor NAD. The first reaction step involves the formation of a hemiacetal intermediate between G3P and a cysteine residue, and this hemiacetal intermediate is then oxidized to a thioester, with concomitant reduction of NAD to NADH. The reduced NADH is then exchanged with the second NAD, and the thioester is attacked by a nucleophilic inorganic phosphate to produce BPG. The protein is Glyceraldehyde-3-phosphate dehydrogenase 1 (gap1) of Streptomyces avermitilis (strain ATCC 31267 / DSM 46492 / JCM 5070 / NBRC 14893 / NCIMB 12804 / NRRL 8165 / MA-4680).